Reading from the N-terminus, the 246-residue chain is Biosynthetic peptidoglycan transglycosylase (246 aa).

A helical membrane pass occupies residues 28–48 (FALFLVLFLSSVVLFRFVPVP).

This sequence belongs to the glycosyltransferase 51 family.

Its subcellular location is the cell inner membrane. The enzyme catalyses [GlcNAc-(1-&gt;4)-Mur2Ac(oyl-L-Ala-gamma-D-Glu-L-Lys-D-Ala-D-Ala)](n)-di-trans,octa-cis-undecaprenyl diphosphate + beta-D-GlcNAc-(1-&gt;4)-Mur2Ac(oyl-L-Ala-gamma-D-Glu-L-Lys-D-Ala-D-Ala)-di-trans,octa-cis-undecaprenyl diphosphate = [GlcNAc-(1-&gt;4)-Mur2Ac(oyl-L-Ala-gamma-D-Glu-L-Lys-D-Ala-D-Ala)](n+1)-di-trans,octa-cis-undecaprenyl diphosphate + di-trans,octa-cis-undecaprenyl diphosphate + H(+). It participates in cell wall biogenesis; peptidoglycan biosynthesis. Its function is as follows. Peptidoglycan polymerase that catalyzes glycan chain elongation from lipid-linked precursors. The polypeptide is Biosynthetic peptidoglycan transglycosylase (Pasteurella multocida (strain Pm70)).